We begin with the raw amino-acid sequence, 449 residues long: Elongation factor 1-alpha 1 (449 aa).

The 226-residue stretch at 5-230 folds into the tr-type G domain; it reads KVHMNLVVVG…DMLEPPVRPS (226 aa). Residues 14–21 form a G1 region; that stretch reads GHVDAGKS. 14-21 contributes to the GTP binding site; that stretch reads GHVDAGKS. Residues 70 to 74 form a G2 region; it reads GITID. Residues 91–94 are G3; that stretch reads DAPG. Residues 91–95 and 153–156 contribute to the GTP site; these read DAPGH and NKMD. The segment at 153–156 is G4; it reads NKMD. Residues 194 to 196 are G5; that stretch reads SGW. Position 362 is a 5-glutamyl glycerylphosphorylethanolamine (Glu-362).

It belongs to the TRAFAC class translation factor GTPase superfamily. Classic translation factor GTPase family. EF-Tu/EF-1A subfamily. In terms of processing, phosphatidylethanolamine (PE) is a direct precursor of the ethanolamine-phosphoglycerol (EPG) moiety.

Its subcellular location is the cytoplasm. This protein promotes the GTP-dependent binding of aminoacyl-tRNA to the A-site of ribosomes during protein biosynthesis. In Trypanosoma brucei brucei (strain 927/4 GUTat10.1), this protein is Elongation factor 1-alpha 1 (TEF1).